A 270-amino-acid chain; its full sequence is Vegetative storage protein 1 (270 aa).

An N-terminal signal peptide occupies residues 1–17 (MKILSLSLLLLLAATVS). Asn115 and Asn215 each carry an N-linked (GlcNAc...) asparagine glycan.

This sequence belongs to the APS1/VSP family. In terms of tissue distribution, expressed in leaves and in gynoecia, especially in styles, the basal and distal ends of ovaries and in siliques.

In terms of biological role, may function as somatic storage protein during early seedling development. The polypeptide is Vegetative storage protein 1 (VSP1) (Arabidopsis thaliana (Mouse-ear cress)).